Consider the following 204-residue polypeptide: Urease accessory protein UreG (204 aa).

Position 11–18 (11–18 (GPVGAGKT)) interacts with GTP.

It belongs to the SIMIBI class G3E GTPase family. UreG subfamily. Homodimer. UreD, UreF and UreG form a complex that acts as a GTP-hydrolysis-dependent molecular chaperone, activating the urease apoprotein by helping to assemble the nickel containing metallocenter of UreC. The UreE protein probably delivers the nickel.

The protein localises to the cytoplasm. Functionally, facilitates the functional incorporation of the urease nickel metallocenter. This process requires GTP hydrolysis, probably effectuated by UreG. The chain is Urease accessory protein UreG from Staphylococcus saprophyticus subsp. saprophyticus (strain ATCC 15305 / DSM 20229 / NCIMB 8711 / NCTC 7292 / S-41).